The sequence spans 564 residues: Proline--tRNA ligase (564 aa).

This sequence belongs to the class-II aminoacyl-tRNA synthetase family. ProS type 1 subfamily. Homodimer.

The protein localises to the cytoplasm. The catalysed reaction is tRNA(Pro) + L-proline + ATP = L-prolyl-tRNA(Pro) + AMP + diphosphate. Functionally, catalyzes the attachment of proline to tRNA(Pro) in a two-step reaction: proline is first activated by ATP to form Pro-AMP and then transferred to the acceptor end of tRNA(Pro). As ProRS can inadvertently accommodate and process non-cognate amino acids such as alanine and cysteine, to avoid such errors it has two additional distinct editing activities against alanine. One activity is designated as 'pretransfer' editing and involves the tRNA(Pro)-independent hydrolysis of activated Ala-AMP. The other activity is designated 'posttransfer' editing and involves deacylation of mischarged Ala-tRNA(Pro). The misacylated Cys-tRNA(Pro) is not edited by ProRS. This Coxiella burnetii (strain Dugway 5J108-111) protein is Proline--tRNA ligase.